The sequence spans 39 residues: Photosystem II reaction center protein J (39 aa).

A helical transmembrane segment spans residues 7–27 (IPLWIVAVVAGLGVITVVGLF).

Belongs to the PsbJ family. PSII is composed of 1 copy each of membrane proteins PsbA, PsbB, PsbC, PsbD, PsbE, PsbF, PsbH, PsbI, PsbJ, PsbK, PsbL, PsbM, PsbT, PsbX, PsbY, PsbZ, Psb30/Ycf12, peripheral proteins PsbO, CyanoQ (PsbQ), PsbU, PsbV and a large number of cofactors. It forms dimeric complexes.

The protein resides in the cellular thylakoid membrane. Its function is as follows. One of the components of the core complex of photosystem II (PSII). PSII is a light-driven water:plastoquinone oxidoreductase that uses light energy to abstract electrons from H(2)O, generating O(2) and a proton gradient subsequently used for ATP formation. It consists of a core antenna complex that captures photons, and an electron transfer chain that converts photonic excitation into a charge separation. The protein is Photosystem II reaction center protein J of Synechococcus sp. (strain JA-2-3B'a(2-13)) (Cyanobacteria bacterium Yellowstone B-Prime).